Here is a 135-residue protein sequence, read N- to C-terminus: uncharacterized protein (135 aa).

Helical transmembrane passes span 11 to 31 (ILFFGLAFILVGFGLILGYLI) and 57 to 77 (LGTAAAVAGGVIAGELITDAI).

It is found in the cell membrane. This is an uncharacterized protein from Methanocaldococcus jannaschii (strain ATCC 43067 / DSM 2661 / JAL-1 / JCM 10045 / NBRC 100440) (Methanococcus jannaschii).